The primary structure comprises 364 residues: DNA replication and repair protein RecF (364 aa).

ATP is bound at residue 30–37 (GNNAQGKT).

Belongs to the RecF family.

It localises to the cytoplasm. Its function is as follows. The RecF protein is involved in DNA metabolism; it is required for DNA replication and normal SOS inducibility. RecF binds preferentially to single-stranded, linear DNA. It also seems to bind ATP. This chain is DNA replication and repair protein RecF, found in Clostridium botulinum (strain Okra / Type B1).